The sequence spans 424 residues: Splicing factor 3B subunit 4 (424 aa).

An N-acetylalanine modification is found at Ala2. RRM domains lie at 13–91 (ATVY…KASA) and 100–179 (ANIF…YAFK). Phosphotyrosine is present on Tyr56. Residues 207-424 (PHQLFADAPP…RGPLRGPLPQ (218 aa)) are disordered. A compositionally biased stretch (low complexity) spans 222 to 231 (NPVVSSLGSG). Residues 232–268 (LPPPGMPPPGSFPPPVPPPGALPPGIPPAMPPPPMPP) show a composition bias toward pro residues. Residues 303 to 323 (HPGMSQMQLAHHGPHGLGHPH) show a composition bias toward low complexity. 2 stretches are compositionally biased toward pro residues: residues 332–381 (QPPP…PLMP) and 388–424 (PPRP…PLPQ).

This sequence belongs to the SF3B4 family. Component of the 17S U2 SnRNP complex, a ribonucleoprotein complex that contains small nuclear RNA (snRNA) U2 and a number of specific proteins. Part of the SF3B subcomplex of the 17S U2 SnRNP complex. SF3B associates with the splicing subcomplex SF3A and a 12S RNA unit to form the U2 small nuclear ribonucleoproteins complex (U2 snRNP). SF3B4 has been found in complex spliceosome 'B' and 'C' as well. Component of the minor (U12-type spliceosome) spliceosome. Found in a complex with PRMT9, SF3B2 and SF3B4.

The protein localises to the nucleus. Component of the 17S U2 SnRNP complex of the spliceosome, a large ribonucleoprotein complex that removes introns from transcribed pre-mRNAs. The 17S U2 SnRNP complex (1) directly participates in early spliceosome assembly and (2) mediates recognition of the intron branch site during pre-mRNA splicing by promoting the selection of the pre-mRNA branch-site adenosine, the nucleophile for the first step of splicing. Within the 17S U2 SnRNP complex, SF3B4 is part of the SF3B subcomplex, which is required for 'A' complex assembly formed by the stable binding of U2 snRNP to the branchpoint sequence in pre-mRNA. Sequence independent binding of SF3A and SF3B subcomplexes upstream of the branch site is essential, it may anchor U2 snRNP to the pre-mRNA. May also be involved in the assembly of the 'E' complex. Also acts as a component of the minor spliceosome, which is involved in the splicing of U12-type introns in pre-mRNAs. In Rattus norvegicus (Rat), this protein is Splicing factor 3B subunit 4 (Sf3b4).